Consider the following 355-residue polypeptide: Chromatin modification-related protein EAF3 (355 aa).

The Tudor-knot domain occupies 3 to 77; sequence EVGGKCLAYH…WDEWVSVDRI (75 aa). Residues 98 to 150 form a disordered region; it reads ASLAQQQKTKNGGSAKRGGGGAHSESNHGGRRSGSGDRRDSNAEERGIVPSEG. The segment covering 131-144 has biased composition (basic and acidic residues); the sequence is GSGDRRDSNAEERG. Residues 163-353 enclose the MRG domain; the sequence is SRNKLRIHIP…TSSQYEGVAL (191 aa).

Belongs to the MRG family. In terms of assembly, component of the NuA4 histone acetyltransferase complex.

It localises to the nucleus. In terms of biological role, involved in deacetylation of histones, chromatin assembly and chromosome segregation. May act as a transcriptional oscillator, directing histone deacetylases to specific chromosomal domains. Component of the NuA4 histone acetyltransferase complex which is involved in transcriptional activation of selected genes principally by acetylation of nucleosomal histone H4 and H2A. The NuA4 complex is also involved in DNA repair. The polypeptide is Chromatin modification-related protein EAF3 (EAF3) (Candida glabrata (strain ATCC 2001 / BCRC 20586 / JCM 3761 / NBRC 0622 / NRRL Y-65 / CBS 138) (Yeast)).